Reading from the N-terminus, the 247-residue chain is Adenosylcobinamide-GDP ribazoletransferase (247 aa).

A run of 5 helical transmembrane segments spans residues 34-54 (IITFPLIGLLLGAISGLVFMV), 59-79 (CGVPLAALFSVLVLALMTGGF), 113-133 (GGLALIFVVLAKILVLSELAL), 138-158 (ILASLAAACAVSRGIAALLMY), and 194-214 (VLLPGMHGVAAMVVTMVAIFI).

It belongs to the CobS family. The cofactor is Mg(2+).

The protein localises to the cell inner membrane. The catalysed reaction is alpha-ribazole + adenosylcob(III)inamide-GDP = adenosylcob(III)alamin + GMP + H(+). It carries out the reaction alpha-ribazole 5'-phosphate + adenosylcob(III)inamide-GDP = adenosylcob(III)alamin 5'-phosphate + GMP + H(+). The protein operates within cofactor biosynthesis; adenosylcobalamin biosynthesis; adenosylcobalamin from cob(II)yrinate a,c-diamide: step 7/7. Joins adenosylcobinamide-GDP and alpha-ribazole to generate adenosylcobalamin (Ado-cobalamin). Also synthesizes adenosylcobalamin 5'-phosphate from adenosylcobinamide-GDP and alpha-ribazole 5'-phosphate. The protein is Adenosylcobinamide-GDP ribazoletransferase of Shigella dysenteriae serotype 1 (strain Sd197).